Reading from the N-terminus, the 540-residue chain is 2-isopropylmalate synthase (540 aa).

Positions 8–271 (VLIFDTTLRD…NPFFGRESDS (264 aa)) constitute a Pyruvate carboxyltransferase domain. Mn(2+)-binding residues include D17, H208, H210, and N244. The tract at residues 408–540 (QLRLVQVSCG…AVLADRRPGI (133 aa)) is regulatory domain.

This sequence belongs to the alpha-IPM synthase/homocitrate synthase family. LeuA type 1 subfamily. As to quaternary structure, homodimer. Mn(2+) serves as cofactor.

It is found in the cytoplasm. It catalyses the reaction 3-methyl-2-oxobutanoate + acetyl-CoA + H2O = (2S)-2-isopropylmalate + CoA + H(+). It functions in the pathway amino-acid biosynthesis; L-leucine biosynthesis; L-leucine from 3-methyl-2-oxobutanoate: step 1/4. Catalyzes the condensation of the acetyl group of acetyl-CoA with 3-methyl-2-oxobutanoate (2-ketoisovalerate) to form 3-carboxy-3-hydroxy-4-methylpentanoate (2-isopropylmalate). The polypeptide is 2-isopropylmalate synthase (Prochlorococcus marinus (strain MIT 9303)).